A 164-amino-acid polypeptide reads, in one-letter code: Cytochrome c-type biogenesis protein CcmE (164 aa).

The Cytoplasmic portion of the chain corresponds to 1 to 8; that stretch reads MNPRRKSR. The chain crosses the membrane as a helical; Signal-anchor for type II membrane protein span at residues 9 to 29; sequence LYLAMVVLIGISLTTTLVLYA. The Periplasmic portion of the chain corresponds to 30–164; the sequence is LRSNIDLFYT…RGTNTTGNAL (135 aa). H130 and Y134 together coordinate heme. The interval 140-164 is disordered; it reads EEAMKENHSRPAAAYRGTNTTGNAL.

Belongs to the CcmE/CycJ family.

It is found in the cell inner membrane. Its function is as follows. Heme chaperone required for the biogenesis of c-type cytochromes. Transiently binds heme delivered by CcmC and transfers the heme to apo-cytochromes in a process facilitated by CcmF and CcmH. The chain is Cytochrome c-type biogenesis protein CcmE from Yersinia pseudotuberculosis serotype O:3 (strain YPIII).